Reading from the N-terminus, the 360-residue chain is Photosystem II protein D1 (360 aa).

The next 3 membrane-spanning stretches (helical) occupy residues 32–49 (YLGW…SATF), 121–136 (HFFI…EWEL), and 145–159 (WIFV…AASA). Position 121 (H121) interacts with chlorophyll a. Y129 lines the pheophytin a pocket. Residues D173 and E192 each coordinate [CaMn4O5] cluster. Residues 200 to 221 (LHMFGVAAVFGGSLFSAMHGSL) traverse the membrane as a helical segment. Position 201 (H201) interacts with chlorophyll a. Residues H218 and 267-268 (SF) each bind a quinone. H218 provides a ligand contact to Fe cation. Residue H275 coordinates Fe cation. A helical membrane pass occupies residues 277–291 (FLGAWPVVGIWLTAM). [CaMn4O5] cluster is bound by residues H335, E336, D345, and A347. A propeptide spanning residues 348–360 (CANCLLSLWPMVG) is cleaved from the precursor.

It belongs to the reaction center PufL/M/PsbA/D family. PSII is composed of 1 copy each of membrane proteins PsbA, PsbB, PsbC, PsbD, PsbE, PsbF, PsbH, PsbI, PsbJ, PsbK, PsbL, PsbM, PsbT, PsbX, PsbY, PsbZ, Psb30/Ycf12, at least 3 peripheral proteins of the oxygen-evolving complex and a large number of cofactors. It forms dimeric complexes. It depends on The D1/D2 heterodimer binds P680, chlorophylls that are the primary electron donor of PSII, and subsequent electron acceptors. It shares a non-heme iron and each subunit binds pheophytin, quinone, additional chlorophylls, carotenoids and lipids. D1 provides most of the ligands for the Mn4-Ca-O5 cluster of the oxygen-evolving complex (OEC). There is also a Cl(-1) ion associated with D1 and D2, which is required for oxygen evolution. The PSII complex binds additional chlorophylls, carotenoids and specific lipids. as a cofactor. In terms of processing, tyr-164 forms a radical intermediate that is referred to as redox-active TyrZ, YZ or Y-Z. Post-translationally, C-terminally processed by CtpA; processing is essential to allow assembly of the oxygen-evolving complex and thus photosynthetic growth.

The protein resides in the plastid. The protein localises to the chloroplast thylakoid membrane. It carries out the reaction 2 a plastoquinone + 4 hnu + 2 H2O = 2 a plastoquinol + O2. In terms of biological role, photosystem II (PSII) is a light-driven water:plastoquinone oxidoreductase that uses light energy to abstract electrons from H(2)O, generating O(2) and a proton gradient subsequently used for ATP formation. It consists of a core antenna complex that captures photons, and an electron transfer chain that converts photonic excitation into a charge separation. The D1/D2 (PsbA/PsbD) reaction center heterodimer binds P680, the primary electron donor of PSII as well as several subsequent electron acceptors. The chain is Photosystem II protein D1 from Karenia mikimotoi (Red tide dinoflagellate).